The sequence spans 546 residues: Intermembrane transport protein PqiB (546 aa).

At 1–15 the chain is on the cytoplasmic side; it reads MESNNGEAKIQKVKN. The helical transmembrane segment at 16 to 36 threads the bilayer; it reads WSPVWIFPIVTALIGAWVLFY. Over 37–546 the chain is Periplasmic; sequence HYSHQGPEVT…KDPEPKRAKQ (510 aa). MCE/MlaD stretches follow at residues 42 to 133, 158 to 217, and 285 to 389; these read GPEV…LQPG, IRVI…NNVR, and HIDY…LDFY. The stretch at 437-464 forms a coiled coil; sequence IEQATSTLSESQRTMKNLQTTLDSMNKI.

It belongs to the PqiB family. In terms of assembly, homohexamer. May form a complex composed of PqiA, PqiB and PqiC. Interacts with PqiC.

The protein resides in the cell inner membrane. Functionally, forms a tunnel that spans the entire periplasmic space. Could be implicated in lipid transport between the inner membrane and the outer membrane. Binds phospholipids. Required for outer membrane homeostasis. Contributes to membrane integrity. The protein is Intermembrane transport protein PqiB of Escherichia coli (strain K12).